Consider the following 152-residue polypeptide: 3-hydroxyacyl-[acyl-carrier-protein] dehydratase FabZ (152 aa).

His-58 is a catalytic residue.

This sequence belongs to the thioester dehydratase family. FabZ subfamily.

Its subcellular location is the cytoplasm. The enzyme catalyses a (3R)-hydroxyacyl-[ACP] = a (2E)-enoyl-[ACP] + H2O. Functionally, involved in unsaturated fatty acids biosynthesis. Catalyzes the dehydration of short chain beta-hydroxyacyl-ACPs and long chain saturated and unsaturated beta-hydroxyacyl-ACPs. This is 3-hydroxyacyl-[acyl-carrier-protein] dehydratase FabZ from Synechococcus sp. (strain RCC307).